Consider the following 96-residue polypeptide: Phosphoribosyl-ATP pyrophosphatase (96 aa).

It belongs to the PRA-PH family.

The protein localises to the cytoplasm. The enzyme catalyses 1-(5-phospho-beta-D-ribosyl)-ATP + H2O = 1-(5-phospho-beta-D-ribosyl)-5'-AMP + diphosphate + H(+). It functions in the pathway amino-acid biosynthesis; L-histidine biosynthesis; L-histidine from 5-phospho-alpha-D-ribose 1-diphosphate: step 2/9. The protein is Phosphoribosyl-ATP pyrophosphatase of Methanococcus maripaludis (strain C6 / ATCC BAA-1332).